We begin with the raw amino-acid sequence, 257 residues long: Aspartate/glutamate leucyltransferase (257 aa).

The protein belongs to the R-transferase family. Bpt subfamily.

It is found in the cytoplasm. The enzyme catalyses N-terminal L-glutamyl-[protein] + L-leucyl-tRNA(Leu) = N-terminal L-leucyl-L-glutamyl-[protein] + tRNA(Leu) + H(+). The catalysed reaction is N-terminal L-aspartyl-[protein] + L-leucyl-tRNA(Leu) = N-terminal L-leucyl-L-aspartyl-[protein] + tRNA(Leu) + H(+). Functionally, functions in the N-end rule pathway of protein degradation where it conjugates Leu from its aminoacyl-tRNA to the N-termini of proteins containing an N-terminal aspartate or glutamate. The protein is Aspartate/glutamate leucyltransferase of Nitrobacter winogradskyi (strain ATCC 25391 / DSM 10237 / CIP 104748 / NCIMB 11846 / Nb-255).